The following is a 517-amino-acid chain: 2,3-bisphosphoglycerate-independent phosphoglycerate mutase (517 aa).

Aspartate 14 and serine 64 together coordinate Mn(2+). The active-site Phosphoserine intermediate is the serine 64. Substrate-binding positions include histidine 125, 155 to 156 (RD), arginine 187, arginine 193, 263 to 266 (RSDR), and lysine 337. 5 residues coordinate Mn(2+): aspartate 404, histidine 408, aspartate 445, histidine 446, and histidine 464.

Belongs to the BPG-independent phosphoglycerate mutase family. In terms of assembly, monomer. Mn(2+) serves as cofactor.

It carries out the reaction (2R)-2-phosphoglycerate = (2R)-3-phosphoglycerate. The protein operates within carbohydrate degradation; glycolysis; pyruvate from D-glyceraldehyde 3-phosphate: step 3/5. Functionally, catalyzes the interconversion of 2-phosphoglycerate and 3-phosphoglycerate. The protein is 2,3-bisphosphoglycerate-independent phosphoglycerate mutase of Nitrosococcus oceani (strain ATCC 19707 / BCRC 17464 / JCM 30415 / NCIMB 11848 / C-107).